We begin with the raw amino-acid sequence, 448 residues long: Exodeoxyribonuclease 7 large subunit (448 aa).

The protein belongs to the XseA family. Heterooligomer composed of large and small subunits.

It localises to the cytoplasm. Its subcellular location is the nucleoid. The enzyme catalyses Exonucleolytic cleavage in either 5'- to 3'- or 3'- to 5'-direction to yield nucleoside 5'-phosphates.. Bidirectionally degrades single-stranded DNA into large acid-insoluble oligonucleotides, which are then degraded further into small acid-soluble oligonucleotides. This is Exodeoxyribonuclease 7 large subunit from Bacillus subtilis (strain 168).